Consider the following 174-residue polypeptide: MEKMMHRETERQRRQEMASLYASLRSLLPLHFIKGKRSTSDQVNEAVNYIKYLQRKIKELSVRRDDLMVLSRGSLLGSSNGDFKEDVEMISGKNHVVVRQCLVGVEIMLSSRCCGGQPRFSSVLQVLSEYGLCLLNSISSIVDDRLVYTIQAEVNDMALMIDLAELEKRLIRMK.

A bHLH domain is found at 1-53 (MEKMMHRETERQRRQEMASLYASLRSLLPLHFIKGKRSTSDQVNEAVNYIKYL).

As to quaternary structure, homodimer. Expressed constitutively in roots, leaves, stems, and flowers.

Its subcellular location is the nucleus. This Arabidopsis thaliana (Mouse-ear cress) protein is Transcription factor bHLH36 (BHLH36).